Reading from the N-terminus, the 183-residue chain is Auxin-responsive protein IAA20 (183 aa).

2 disordered regions span residues M1–A23 and G42–R77. An EAR-like (transcriptional repression) motif is present at residues L3–L7. A PB1 domain is found at G98–V183.

It belongs to the Aux/IAA family. In terms of assembly, homodimers and heterodimers. Expressed at very low levels in etiolated seedlings and flowers.

It localises to the nucleus. In terms of biological role, aux/IAA proteins are short-lived transcriptional factors that function as repressors of early auxin response genes at low auxin concentrations. The polypeptide is Auxin-responsive protein IAA20 (IAA20) (Oryza sativa subsp. japonica (Rice)).